Reading from the N-terminus, the 341-residue chain is UDP-3-O-acylglucosamine N-acyltransferase (341 aa).

The active-site Proton acceptor is the H239.

Belongs to the transferase hexapeptide repeat family. LpxD subfamily. In terms of assembly, homotrimer.

The catalysed reaction is a UDP-3-O-[(3R)-3-hydroxyacyl]-alpha-D-glucosamine + a (3R)-hydroxyacyl-[ACP] = a UDP-2-N,3-O-bis[(3R)-3-hydroxyacyl]-alpha-D-glucosamine + holo-[ACP] + H(+). The protein operates within bacterial outer membrane biogenesis; LPS lipid A biosynthesis. Functionally, catalyzes the N-acylation of UDP-3-O-acylglucosamine using 3-hydroxyacyl-ACP as the acyl donor. Is involved in the biosynthesis of lipid A, a phosphorylated glycolipid that anchors the lipopolysaccharide to the outer membrane of the cell. In Photobacterium profundum (strain SS9), this protein is UDP-3-O-acylglucosamine N-acyltransferase.